A 568-amino-acid chain; its full sequence is Protein yellow (568 aa).

Residues 1–28 (MHAQDKGGILPALSLLLIAVAMVSPSQA) form the signal peptide. N-linked (GlcNAc...) asparagine glycans are attached at residues Asn151 and Asn222.

The protein belongs to the major royal jelly protein family.

Its subcellular location is the secreted. Functionally, controls the pigmentation pattern of the adult cuticle and larval mouth parts. The protein is Protein yellow (y) of Drosophila madeirensis (Fruit fly).